The chain runs to 408 residues: S-adenosylmethionine synthase (408 aa).

Position 15 (His15) interacts with ATP. Asp17 contacts Mg(2+). Glu43 is a binding site for K(+). L-methionine contacts are provided by Glu56 and Gln100. Residues 100–110 are flexible loop; sequence QSPDIAQGVNE. ATP contacts are provided by residues 171–173, 248–249, Asp257, 263–264, Ala280, and Lys284; these read DGK, KF, and RK. Residue Asp257 participates in L-methionine binding. Lys288 is a binding site for L-methionine.

Belongs to the AdoMet synthase family. As to quaternary structure, homotetramer; dimer of dimers. It depends on Mg(2+) as a cofactor. Requires K(+) as cofactor.

The protein localises to the cytoplasm. The enzyme catalyses L-methionine + ATP + H2O = S-adenosyl-L-methionine + phosphate + diphosphate. It functions in the pathway amino-acid biosynthesis; S-adenosyl-L-methionine biosynthesis; S-adenosyl-L-methionine from L-methionine: step 1/1. In terms of biological role, catalyzes the formation of S-adenosylmethionine (AdoMet) from methionine and ATP. The overall synthetic reaction is composed of two sequential steps, AdoMet formation and the subsequent tripolyphosphate hydrolysis which occurs prior to release of AdoMet from the enzyme. The protein is S-adenosylmethionine synthase of Synechococcus sp. (strain CC9902).